The chain runs to 227 residues: Probable FKBP-type 25 kDa peptidyl-prolyl cis-trans isomerase (227 aa).

A PPIase FKBP-type domain is found at 144–227 (ATQVHVRYRG…VFEIDLLGFR (84 aa)).

Belongs to the FKBP-type PPIase family.

The catalysed reaction is [protein]-peptidylproline (omega=180) = [protein]-peptidylproline (omega=0). In terms of biological role, PPIases accelerate the folding of proteins. This chain is Probable FKBP-type 25 kDa peptidyl-prolyl cis-trans isomerase (fkl), found in Pseudomonas aeruginosa (strain ATCC 15692 / DSM 22644 / CIP 104116 / JCM 14847 / LMG 12228 / 1C / PRS 101 / PAO1).